Reading from the N-terminus, the 431-residue chain is Serine hydroxymethyltransferase (431 aa).

(6S)-5,6,7,8-tetrahydrofolate-binding positions include Leu128 and 132 to 134 (GHL). Lys237 is subject to N6-(pyridoxal phosphate)lysine. Glu253 contributes to the (6S)-5,6,7,8-tetrahydrofolate binding site.

It belongs to the SHMT family. As to quaternary structure, homodimer. The cofactor is pyridoxal 5'-phosphate.

The protein resides in the cytoplasm. The catalysed reaction is (6R)-5,10-methylene-5,6,7,8-tetrahydrofolate + glycine + H2O = (6S)-5,6,7,8-tetrahydrofolate + L-serine. It functions in the pathway one-carbon metabolism; tetrahydrofolate interconversion. Its pathway is amino-acid biosynthesis; glycine biosynthesis; glycine from L-serine: step 1/1. In terms of biological role, catalyzes the reversible interconversion of serine and glycine with tetrahydrofolate (THF) serving as the one-carbon carrier. This reaction serves as the major source of one-carbon groups required for the biosynthesis of purines, thymidylate, methionine, and other important biomolecules. Also exhibits THF-independent aldolase activity toward beta-hydroxyamino acids, producing glycine and aldehydes, via a retro-aldol mechanism. This is Serine hydroxymethyltransferase from Cereibacter sphaeroides (strain ATCC 17023 / DSM 158 / JCM 6121 / CCUG 31486 / LMG 2827 / NBRC 12203 / NCIMB 8253 / ATH 2.4.1.) (Rhodobacter sphaeroides).